Consider the following 1013-residue polypeptide: Poly [ADP-ribose] polymerase 1 (1013 aa).

Residue Ala2 is modified to N-acetylalanine. The PARP-type 1 zinc finger occupies 9–93; it reads YRVQYAKSGR…KVKKTAEAGG (85 aa). Residues Cys21 and Cys24 each coordinate Zn(2+). Position 41 is a phosphoserine (Ser41). His53 and Cys56 together coordinate Zn(2+). Lys97 and Lys105 each carry N6-acetyllysine. The segment at 113 to 203 adopts a PARP-type 2 zinc-finger fold; sequence FAAEYAKSNR…ALKKQLPAIK (91 aa). 2 residues coordinate Zn(2+): Cys125 and Cys128. An N6-acetyllysine modification is found at Lys131. Zn(2+) contacts are provided by His159 and Cys162. Phosphoserine is present on residues Ser177, Ser179, and Ser185. A Glycyl lysine isopeptide (Lys-Gly) (interchain with G-Cter in SUMO2) cross-link involves residue Lys192. Residues 200-226 form a disordered region; it reads PAIKNEGKRKGDEVDGTDEVAKKKSRK. Lys203 participates in a covalent cross-link: Glycyl lysine isopeptide (Lys-Gly) (interchain with G-Cter in SUMO1); alternate. Lys203 is covalently cross-linked (Glycyl lysine isopeptide (Lys-Gly) (interchain with G-Cter in SUMO2); alternate). Over residues 204-226 the composition is skewed to basic and acidic residues; that stretch reads NEGKRKGDEVDGTDEVAKKKSRK. 2 short sequence motifs (nuclear localization signal) span residues 207 to 209 and 221 to 226; these read KRK and KKKSRK. One can recognise a PADR1 zinc-binding domain in the interval 225–359; sequence RKETDKYSKL…VKKQDRIFPP (135 aa). Lys249 participates in a covalent cross-link: Glycyl lysine isopeptide (Lys-Gly) (interchain with G-Cter in SUMO2). Ser274 and Ser277 each carry phosphoserine. Residues 290 to 332 form a zinc ribbon region; the sequence is GALLPCKECSGQLVFKSDAYYCTGDVTAWTKCMVKTQNPSRKE. Zn(2+) contacts are provided by Cys295, Cys298, Cys311, and Cys321. The automodification domain stretch occupies residues 373–523; that stretch reads VTSAPTAVNS…GVNKSEKRMK (151 aa). In terms of domain architecture, BRCT spans 385–476; it reads PADKPLSNMK…KSLQDLLSAH (92 aa). Asp387 carries the post-translational modification PolyADP-ribosyl aspartic acid. PolyADP-ribosyl glutamic acid occurs at positions 407, 413, 435, 437, 444, 445, 448, and 456. Lys467 is covalently cross-linked (Glycyl lysine isopeptide (Lys-Gly) (interchain with G-Cter in SUMO2)). PolyADP-ribosyl glutamic acid is present on Glu484. A Glycyl lysine isopeptide (Lys-Gly) (interchain with G-Cter in SUMO1); alternate cross-link involves residue Lys486. Lys486 is covalently cross-linked (Glycyl lysine isopeptide (Lys-Gly) (interchain with G-Cter in SUMO2); alternate). PolyADP-ribosyl glutamic acid is present on residues Glu488 and Glu491. The disordered stretch occupies residues 489–508; the sequence is PGEVVAPRGKSAAPSKKSKG. A compositionally biased stretch (low complexity) spans 494-503; it reads APRGKSAAPS. Ser499, Ser503, and Ser506 each carry ADP-ribosylserine. A Glycyl lysine isopeptide (Lys-Gly) (interchain with G-Cter in SUMO2) cross-link involves residue Lys511. Residues Glu512 and Glu513 each carry the polyADP-ribosyl glutamic acid modification. Position 518 is an ADP-ribosylserine (Ser518). PolyADP-ribosyl glutamic acid is present on Glu519. At Lys520 the chain carries N6-(ADP-ribosyl)lysine. Lys527 participates in a covalent cross-link: Glycyl lysine isopeptide (Lys-Gly) (interchain with G-Cter in SUMO2). The WGR domain maps to 541–637; it reads SAHVLEKGGK…KNFTKYPKKF (97 aa). Residue Thr593 is modified to Phosphothreonine. N6-acetyllysine is present on residues Lys599 and Lys620. In terms of domain architecture, PARP alpha-helical spans 661–778; the sequence is KSKLPKPVQE…DIEVAYSLLR (118 aa). Lys747 participates in a covalent cross-link: Glycyl lysine isopeptide (Lys-Gly) (interchain with G-Cter in SUMO1); alternate. A Glycyl lysine isopeptide (Lys-Gly) (interchain with G-Cter in SUMO2); alternate cross-link involves residue Lys747. Phosphoserine occurs at positions 781 and 785. Positions 787-1013 constitute a PARP catalytic domain; that stretch reads DPIDVNYEKL…LKFNFKTSLW (227 aa). NAD(+) contacts are provided by residues 861–863, Gly870, Arg877, and Ser903; that span reads HGS. Glu987 functions as the For poly [ADP-ribose] polymerase activity in the catalytic mechanism.

It belongs to the ARTD/PARP family. As to quaternary structure, homodimer; PARP-type zinc-fingers from separate PARP1 molecules form a dimer module that specifically recognizes DNA strand breaks. Heterodimer; heterodimerizes with PARP2. Interacts (via the PARP catalytic domain) with HPF1. Interacts with NMNAT1. Interacts with nucleosomes; with a preference for nucleosomes containing H2A.X. Interacts with APTX. Component of a base excision repair (BER) complex, containing at least XRCC1, PARP1, PARP2, POLB and LRIG3. Interacts with SRY. The SWAP complex consists of NPM1, NCL, PARP1 and SWAP70. Interacts with TIAM2. Interacts with PARP3; leading to activate PARP1 in absence of DNA. Interacts (when poly-ADP-ribosylated) with CHD1L (via macro domain). Interacts with the DNA polymerase alpha catalytic subunit POLA1; this interaction functions as part of the control of replication fork progression. Interacts with EEF1A1 and TXK. Interacts with RNF4. Interacts with RNF146. Interacts with ZNF423. Interacts with APLF. Interacts with SNAI1 (via zinc fingers); the interaction requires SNAI1 to be poly-ADP-ribosylated and non-phosphorylated (active) by GSK3B. Interacts (when poly-ADP-ribosylated) with PARP9. Interacts with NR4A3; activates PARP1 by improving acetylation of PARP1 and suppressing the interaction between PARP1 and SIRT1. Interacts (via catalytic domain) with PUM3; the interaction inhibits the poly-ADP-ribosylation activity of PARP1 and the degradation of PARP1 by CASP3 following genotoxic stress. Interacts with ZNF365. Interacts with RRP1B. Interacts with TIMELESS; the interaction is direct. Interacts with CGAS; leading to impede the formation of the PARP1-TIMELESS complex. Interacts with KHDC3L, the interaction is increased following the formation of DNA double-strand breaks. Interacts (when auto-poly-ADP-ribosylated) with XRCC1; leading to inhibit PARP1 ADP-ribosyltransferase activity. Interacts with SPINDOC; promoting PARP1 ADP-ribosyltransferase activity. Interacts with BANF1; leading to inhibit PARP1 ADP-ribosyltransferase activity in response to oxidative DNA damage. Interacts (when sumoylated and ubiquitinated) with VCP/p97; leading to its extraction from chromatin. Interacts with YARS1; promoting PARP1 ADP-ribosyltransferase activity. Interacts with PACMP micropeptide; Interacts with PACMP micropeptide; interaction. Interacts (when poly-ADP-ribosylated) with isoform 1 of MACROH2A1; MACROH2A1 specifically binds to poly-ADP-ribose chains and inhibits PARP1 activity, limiting the consumption of nuclear NAD(+). Interacts with CARM1; promoting recruitment to replication forks. Interacts with RECQL. Interacts with ZNF32; the interaction reshapes ZNF432 interacting proteins. Interacts with TPRN; TPRN interacts with a number of DNA damage response proteins, is recruited to sites of DNA damage and may play a role in DNA damage repair. In terms of assembly, interacts (when auto-poly-ADP-ribosylated) with AIFM1. Post-translationally, poly-ADP-ribosylated on serine, glutamate and aspartate residues by autocatalysis. Auto-ADP-ribosylation on serine takes place following interaction with HPF1. Auto poly-ADP-ribosylation on serine residues promotes its dissociation from chromatin. Poly-ADP-ribosylated by PARP2; poly-ADP-ribosylation mediates the recruitment of CHD1L to DNA damage sites. Mono-ADP-ribosylated at Lys-520 by SIRT6 in response to oxidative stress, promoting recruitment to double-strand breaks (DSBs) sites. S-nitrosylated, leading to inhibit transcription regulation activity. In terms of processing, phosphorylated at Thr-593 by PRKDC in response to DNA damage following virus infection, promoting its translocation to the cytosol. Phosphorylated by TXK. Post-translationally, proteolytically cleaved by caspase-3 (CASP3) and caspase-7 (CASP7) in response to apoptosis to generate the Poly [ADP-ribose] polymerase 1, processed N-terminus and Poly [ADP-ribose] polymerase 1, processed C-terminus forms. Sumoylated with SUMO1 or SUMO2 by PIAS4 following prolonged residence (trapping) to chromatin. Sumoylation promotes ubiquitination by RNF4 and removal from chromatin by VCP/p97. In terms of processing, ubiquitinated by RNF4 following sumoylation by PIAS4 in response to prolonged residence (trapping) to chromatin. Ubiquitination promotes removal from chromatin by VCP/p97. In terms of tissue distribution, widely expressed. Expression is correlated with proliferation, with higher levels occurring during early fetal development and organogenesis and in the highly proliferative cell compartments of adult. Expressed in B-cells that have been induced to switch to various Ig isotypes.

It is found in the chromosome. The protein localises to the nucleus. Its subcellular location is the nucleolus. The protein resides in the cytoplasm. It localises to the cytosol. The catalysed reaction is NAD(+) + (ADP-D-ribosyl)n-acceptor = nicotinamide + (ADP-D-ribosyl)n+1-acceptor + H(+).. The enzyme catalyses L-seryl-[protein] + NAD(+) = O-(ADP-D-ribosyl)-L-seryl-[protein] + nicotinamide + H(+). It carries out the reaction L-aspartyl-[protein] + NAD(+) = 4-O-(ADP-D-ribosyl)-L-aspartyl-[protein] + nicotinamide. It catalyses the reaction L-glutamyl-[protein] + NAD(+) = 5-O-(ADP-D-ribosyl)-L-glutamyl-[protein] + nicotinamide. The catalysed reaction is L-tyrosyl-[protein] + NAD(+) = O-(ADP-D-ribosyl)-L-tyrosyl-[protein] + nicotinamide + H(+). The enzyme catalyses L-histidyl-[protein] + NAD(+) = N(tele)-(ADP-D-ribosyl)-L-histidyl-[protein] + nicotinamide + H(+). ADP-ribosyltransferase activity is regulated via an allosteric activation mechanism. In absence of activation signal, PARP1 is autoinhibited by the PARP alpha-helical domain (also named HD region), which prevents effective NAD(+)-binding. Activity is highly stimulated by signals, such as DNA strand breaks. Binding to damaged DNA unfolds the PARP alpha-helical domain, relieving autoinhibition. Poly-ADP-ribosyltransferase activity is tightly regulated and PARP1 is removed from damaged chromatin following initial poly-ADP-ribosylation of chromatin to avoid prolonged residence (trapping) that has cytotoxic consequences. A number of factors (VCP/p97) or post-translational modifications (auto-poly-ADP-ribosylation or ubiquitination) promote PARP1 removal from chromatin. Its function is as follows. Poly-ADP-ribosyltransferase that mediates poly-ADP-ribosylation of proteins and plays a key role in DNA repair. Mediates glutamate, aspartate, serine, histidine or tyrosine ADP-ribosylation of proteins: the ADP-D-ribosyl group of NAD(+) is transferred to the acceptor carboxyl group of target residues and further ADP-ribosyl groups are transferred to the 2'-position of the terminal adenosine moiety, building up a polymer with an average chain length of 20-30 units. Serine ADP-ribosylation of proteins constitutes the primary form of ADP-ribosylation of proteins in response to DNA damage. Specificity for the different amino acids is conferred by interacting factors, such as HPF1 and NMNAT1. Following interaction with HPF1, catalyzes serine ADP-ribosylation of target proteins; HPF1 confers serine specificity by completing the PARP1 active site. Also catalyzes tyrosine ADP-ribosylation of target proteins following interaction with HPF1. Following interaction with NMNAT1, catalyzes glutamate and aspartate ADP-ribosylation of target proteins; NMNAT1 confers glutamate and aspartate specificity. PARP1 initiates the repair of DNA breaks: recognizes and binds DNA breaks within chromatin and recruits HPF1, licensing serine ADP-ribosylation of target proteins, such as histones (H2BS6ADPr and H3S10ADPr), thereby promoting decompaction of chromatin and the recruitment of repair factors leading to the reparation of DNA strand breaks. HPF1 initiates serine ADP-ribosylation but restricts the polymerase activity of PARP1 in order to limit the length of poly-ADP-ribose chains. In addition to base excision repair (BER) pathway, also involved in double-strand breaks (DSBs) repair: together with TIMELESS, accumulates at DNA damage sites and promotes homologous recombination repair by mediating poly-ADP-ribosylation. Mediates the poly-ADP-ribosylation of a number of proteins, including itself, APLF, CHFR and NFAT5. In addition to proteins, also able to ADP-ribosylate DNA: catalyzes ADP-ribosylation of DNA strand break termini containing terminal phosphates and a 2'-OH group in single- and double-stranded DNA, respectively. Required for PARP9 and DTX3L recruitment to DNA damage sites. PARP1-dependent PARP9-DTX3L-mediated ubiquitination promotes the rapid and specific recruitment of 53BP1/TP53BP1, UIMC1/RAP80, and BRCA1 to DNA damage sites. PARP1-mediated DNA repair in neurons plays a role in sleep: senses DNA damage in neurons and promotes sleep, facilitating efficient DNA repair. In addition to DNA repair, also involved in other processes, such as transcription regulation, programmed cell death, membrane repair, adipogenesis and innate immunity. Acts as a repressor of transcription: binds to nucleosomes and modulates chromatin structure in a manner similar to histone H1, thereby altering RNA polymerase II. Acts both as a positive and negative regulator of transcription elongation, depending on the context. Acts as a positive regulator of transcription elongation by mediating poly-ADP-ribosylation of NELFE, preventing RNA-binding activity of NELFE and relieving transcription pausing. Acts as a negative regulator of transcription elongation in response to DNA damage by catalyzing poly-ADP-ribosylation of CCNT1, disrupting the phase separation activity of CCNT1 and subsequent activation of CDK9. Involved in replication fork progression following interaction with CARM1: mediates poly-ADP-ribosylation at replication forks, slowing fork progression. Poly-ADP-ribose chains generated by PARP1 also play a role in poly-ADP-ribose-dependent cell death, a process named parthanatos. Also acts as a negative regulator of the cGAS-STING pathway. Acts by mediating poly-ADP-ribosylation of CGAS: PARP1 translocates into the cytosol following phosphorylation by PRKDC and catalyzes poly-ADP-ribosylation and inactivation of CGAS. Acts as a negative regulator of adipogenesis: catalyzes poly-ADP-ribosylation of histone H2B on 'Glu-35' (H2BE35ADPr) following interaction with NMNAT1, inhibiting phosphorylation of H2B at 'Ser-36' (H2BS36ph), thereby blocking expression of pro-adipogenetic genes. Involved in the synthesis of ATP in the nucleus, together with NMNAT1, PARG and NUDT5. Nuclear ATP generation is required for extensive chromatin remodeling events that are energy-consuming. Promotes AIFM1-mediated apoptosis. This form, which translocates into the cytoplasm following cleavage by caspase-3 (CASP3) and caspase-7 (CASP7) in response to apoptosis, is auto-poly-ADP-ribosylated and serves as a poly-ADP-ribose carrier to induce AIFM1-mediated apoptosis. Functionally, this cleavage form irreversibly binds to DNA breaks and interferes with DNA repair, promoting DNA damage-induced apoptosis. The chain is Poly [ADP-ribose] polymerase 1 (Parp1) from Mus musculus (Mouse).